We begin with the raw amino-acid sequence, 591 residues long: Probable auxin efflux carrier component 3b (591 aa).

The Extracellular portion of the chain corresponds to 1-6 (MISWHE). The helical transmembrane segment at 7-27 (LYMVLSAVVPLYVAMMVAYGS) threads the bilayer. Topologically, residues 28-38 (VRWWGVLTPEQ) are cytoplasmic. The helical transmembrane segment at 39–59 (CSGINRFVAVIAVPLLSFHFI) threads the bilayer. Val51 contributes to the (indol-3-yl)acetate binding site. At 60–70 (SSSDPYAMNLR) the chain is on the extracellular side. Residues 71–93 (FVAADTLQKVLVLAALAAWSRFP) traverse the membrane as a helical segment. The Cytoplasmic portion of the chain corresponds to 94 to 107 (ARFVPPAWPPLDCS). A helical membrane pass occupies residues 108–128 (ITLFSVSTLPNTLVMGIPLLV). The (indol-3-yl)acetate site is built by Asn118 and Leu120. Residues 129-137 (SMYGPYSGD) lie on the Extracellular side of the membrane. The chain crosses the membrane as a helical span at residues 138–158 (LMVQIVVLQSIVWYTLLLFLF). Tyr151 contacts (indol-3-yl)acetate. At 159–450 (EFRAARVLIA…LIRNPNTYAS (292 aa)) the chain is on the cytoplasmic side. 2 stretches are compositionally biased toward polar residues: residues 243–254 (SRNATPRGSTFT) and 283–292 (SSSRQHTPRP). Disordered regions lie at residues 243-269 (SRNATPRGSTFTLADIPGHQPPNSALR), 283-313 (SSSRQHTPRPSSFDEHAAARARASATVAPTN), 344-374 (ETRRLVPSDAPSIASSRVIRPPPGATGGERA), and 392-420 (AGAKTEQQTTAVTTTTKGGGAAGAERARG). Low complexity predominate over residues 395-407 (KTEQQTTAVTTTT). A helical membrane pass occupies residues 451–471 (LIGLTWSLIAFRFHITMPIIV). The Extracellular segment spans residues 472-474 (AKS). A helical transmembrane segment spans residues 475-495 (ISILSDAGLGMAMFSLGLFMA). Residues 496–511 (TQPKIIACGYSVAAAS) are Cytoplasmic-facing. A helical transmembrane segment spans residues 512–532 (MGVRFFFGPAIMAAASAAVGI). The Extracellular segment spans residues 533-535 (RGT). A helical transmembrane segment spans residues 536–556 (LLRIAIVQAALPQGIVPFVFA). 2 residues coordinate (indol-3-yl)acetate: Ile550 and Val551. The Cytoplasmic portion of the chain corresponds to 557-568 (KEYNLHATILCT). A helical membrane pass occupies residues 569–589 (LVIFGMLIALPITLVYYIILG). The Extracellular portion of the chain corresponds to 590-591 (LL).

This sequence belongs to the auxin efflux carrier (TC 2.A.69.1) family. As to quaternary structure, homodimer. Expressed in stem bases and leaves.

The protein localises to the membrane. Functionally, may act as a component of the auxin efflux carrier. The polypeptide is Probable auxin efflux carrier component 3b (Oryza sativa subsp. japonica (Rice)).